A 107-amino-acid polypeptide reads, in one-letter code: NADH-quinone oxidoreductase subunit K (107 aa).

A run of 3 helical transmembrane segments spans residues 9–29, 36–56, and 68–88; these read IGVN…MFAV, IVIL…FLTF, and FSLF…AIVI.

Belongs to the complex I subunit 4L family. In terms of assembly, NDH-1 is composed of 14 different subunits. Subunits NuoA, H, J, K, L, M, N constitute the membrane sector of the complex.

It localises to the cell inner membrane. The enzyme catalyses a quinone + NADH + 5 H(+)(in) = a quinol + NAD(+) + 4 H(+)(out). NDH-1 shuttles electrons from NADH, via FMN and iron-sulfur (Fe-S) centers, to quinones in the respiratory chain. The immediate electron acceptor for the enzyme in this species is believed to be a menaquinone. Couples the redox reaction to proton translocation (for every two electrons transferred, four hydrogen ions are translocated across the cytoplasmic membrane), and thus conserves the redox energy in a proton gradient. This is NADH-quinone oxidoreductase subunit K from Chlorobaculum tepidum (strain ATCC 49652 / DSM 12025 / NBRC 103806 / TLS) (Chlorobium tepidum).